The primary structure comprises 211 residues: uncharacterized protein (211 aa).

This is an uncharacterized protein from Methanocaldococcus jannaschii (strain ATCC 43067 / DSM 2661 / JAL-1 / JCM 10045 / NBRC 100440) (Methanococcus jannaschii).